A 469-amino-acid polypeptide reads, in one-letter code: E3 ubiquitin-protein ligase TRAIP (469 aa).

The RING-type zinc-finger motif lies at 7-50 (CTICSDFFDHSRDVAAIHCGHTFHLQCLIQWFETAPSRTCPQCR). 2 coiled-coil regions span residues 70–177 (EENV…QSQR) and 201–280 (CVSL…TLNL). Positions 211 to 469 (LKEARKASGE…QAKLDTFLWS (259 aa)) are interaction with CYLD. Lysine 304 is covalently cross-linked (Glycyl lysine isopeptide (Lys-Gly) (interchain with G-Cter in SUMO2)). The PIP-box signature appears at 460 to 469 (QAKLDTFLWS).

The protein belongs to the TRAIP family. As to quaternary structure, interacts (via PIP-box) with PCNA. Binds TRAF1, TRAF2, TRAF3, TRAF5 and TRAF6 is part of the receptor-TRAF signaling complex. May interact with CYLD; the C-terminus interacts with CYLD, however the interaction was not detected with the full-length protein. Interacts with POLK and POLN. Interacts with UIMC1. Post-translationally, sumoylated; sumoylation is required for nuclear localization. Sumoylation increases protein stability, possibly by preventing ubiquitination. Autoubiquitinated.

It is found in the nucleus. The protein resides in the nucleoplasm. It localises to the nucleolus. Its subcellular location is the chromosome. The protein localises to the cytoplasm. It is found in the perinuclear region. The enzyme catalyses S-ubiquitinyl-[E2 ubiquitin-conjugating enzyme]-L-cysteine + [acceptor protein]-L-lysine = [E2 ubiquitin-conjugating enzyme]-L-cysteine + N(6)-ubiquitinyl-[acceptor protein]-L-lysine.. It functions in the pathway protein modification; protein ubiquitination. Its function is as follows. E3 ubiquitin ligase required to protect genome stability in response to replication stress. Acts as a key regulator of interstrand cross-link repair, which takes place when both strands of duplex DNA are covalently tethered together, thereby blocking replication and transcription. Controls the choice between the two pathways of replication-coupled interstrand-cross-link repair by mediating ubiquitination of MCM7 subunit of the CMG helicase complex. Short ubiquitin chains on MCM7 promote recruitment of DNA glycosylase NEIL3. If the interstrand cross-link cannot be cleaved by NEIL3, the ubiquitin chains continue to grow on MCM7, promoting the unloading of the CMG helicase complex by the VCP/p97 ATPase, enabling the Fanconi anemia DNA repair pathway. Only catalyzes ubiquitination of MCM7 when forks converge. Also involved in the repair of covalent DNA-protein cross-links (DPCs) during DNA synthesis: promotes ubiquitination of DPCs, leading to their degradation by the proteasome. Has also been proposed to play a role in promoting translesion synthesis by mediating the assembly of 'Lys-63'-linked poly-ubiquitin chains on the Y-family polymerase POLN in order to facilitate bypass of DNA lesions and preserve genomic integrity. The function in translesion synthesis is however controversial. Acts as a regulator of the spindle assembly checkpoint. Also acts as a negative regulator of innate immune signaling by inhibiting activation of NF-kappa-B mediated by TNF. Negatively regulates TLR3/4- and RIG-I-mediated IRF3 activation and subsequent IFNB1 production and cellular antiviral response by promoting 'Lys-48'-linked polyubiquitination of TNK1 leading to its proteasomal degradation. This Homo sapiens (Human) protein is E3 ubiquitin-protein ligase TRAIP.